Consider the following 311-residue polypeptide: Malate dehydrogenase (311 aa).

NAD(+) is bound by residues 7–13 (GAAGGIG) and aspartate 34. Residues arginine 81 and arginine 87 each coordinate substrate. NAD(+)-binding positions include asparagine 94 and 117 to 119 (ITN). Residues asparagine 119 and arginine 153 each contribute to the substrate site. Histidine 177 functions as the Proton acceptor in the catalytic mechanism. Residue methionine 227 coordinates NAD(+).

It belongs to the LDH/MDH superfamily. MDH type 1 family. As to quaternary structure, homodimer.

It catalyses the reaction (S)-malate + NAD(+) = oxaloacetate + NADH + H(+). In terms of biological role, catalyzes the reversible oxidation of malate to oxaloacetate. The polypeptide is Malate dehydrogenase (Histophilus somni (strain 2336) (Haemophilus somnus)).